The sequence spans 474 residues: PRAME family member 14 (474 aa).

LRR repeat units lie at residues 15 to 38, 204 to 229, 271 to 294, 319 to 342, and 391 to 414; these read QSLL…LYLP, LNSI…CYLK, LLKI…LQNP, LGYL…PLGA, and MGAL…TYPA.

The protein belongs to the PRAME family.

This Homo sapiens (Human) protein is PRAME family member 14.